Reading from the N-terminus, the 245-residue chain is Acetylglutamate kinase (245 aa).

Substrate is bound by residues 41–42 (GG), Arg-63, and Asn-156.

It belongs to the acetylglutamate kinase family. ArgB subfamily.

The protein localises to the cytoplasm. It catalyses the reaction N-acetyl-L-glutamate + ATP = N-acetyl-L-glutamyl 5-phosphate + ADP. It participates in amino-acid biosynthesis; L-arginine biosynthesis; N(2)-acetyl-L-ornithine from L-glutamate: step 2/4. Functionally, catalyzes the ATP-dependent phosphorylation of N-acetyl-L-glutamate. This is Acetylglutamate kinase from Leuconostoc citreum (strain KM20).